We begin with the raw amino-acid sequence, 402 residues long: Envelope glycoprotein D (402 aa).

Residues 1 to 30 (MSTFKLMMDGRLVFAMAIAILSVVLSCGTC) form the signal peptide. Residues 31-355 (EKAKRAVRGR…NSTFVGISVG (325 aa)) lie on the Virion surface side of the membrane. N-linked (GlcNAc...) asparagine; by host glycans are attached at residues Asn53 and Asn61. 3 disulfide bridges follow: Cys88–Cys209, Cys126–Cys223, and Cys138–Cys147. The interval 281–315 (PDNHPGFDSVESEITQNKTDPKPGQADPKPNQPFK) is disordered. 2 N-linked (GlcNAc...) asparagine; by host glycosylation sites follow: Asn297 and Asn346. A helical transmembrane segment spans residues 356 to 372 (LGIAGLVLVGVILYVCL). The Intravirion segment spans residues 373–402 (RRKKELKKSAQNGLTRLRSTFKDVKYTQLP).

Belongs to the herpesviridae glycoprotein D family.

It is found in the virion membrane. Envelope glycoprotein that binds to host cell entry receptors, promoting the virus entry into host cells. May trigger fusion with host membrane, by recruiting the fusion machinery composed of gB and gH/gL. This is Envelope glycoprotein D (gD) from Equus caballus (Horse).